We begin with the raw amino-acid sequence, 348 residues long: Short-wave-sensitive opsin 1 (348 aa).

Residues 1 to 33 (MRKMSEEEFYLFKNISSVGPWDGPQYHIAPVWA) are Extracellular-facing. Asn-14 carries N-linked (GlcNAc...) asparagine glycosylation. A helical membrane pass occupies residues 34-58 (FYLQAAFMGTVFLIGFPLNAMVLVA). Topologically, residues 59–70 (TLRYKKLRQPLN) are cytoplasmic. A helical transmembrane segment spans residues 71–96 (YILVNVSFGGFLLCIFSVFPVFVASC). Residues 97-110 (NGYFVFGRHVCALE) lie on the Extracellular side of the membrane. The cysteines at positions 107 and 184 are disulfide-linked. Residues 111–130 (GFLGTVAGLVTGWSLAFLAF) traverse the membrane as a helical segment. Residues 131 to 149 (ERYIVICKPFGNFRFSSKH) lie on the Cytoplasmic side of the membrane. The chain crosses the membrane as a helical span at residues 150–173 (ALTVVLATWTIGIGVSIPPFFGWS). The Extracellular portion of the chain corresponds to 174–199 (RFIPEGLQCSCGPDWYTVGTKYRSES). Residues 200–227 (YTWFLFIFCFIVPLSLICFSYTQLLRAL) form a helical membrane-spanning segment. Residues 228 to 249 (KAVAAQQQESATTQKAEREVSR) lie on the Cytoplasmic side of the membrane. The helical transmembrane segment at 250–273 (MVVVMVGSFCVCYVPYAAFAMYMV) threads the bilayer. Over 274 to 281 (NNRNHGLD) the chain is Extracellular. Residues 282-306 (LRLVTIPSFFSKSACIYNPIIYCFM) traverse the membrane as a helical segment. Lys-293 bears the N6-(retinylidene)lysine mark. The Cytoplasmic segment spans residues 307–348 (NKQFQACIMKMVCGKAMTDESDTCSSQKTEVSTVSSTQVGPN).

The protein belongs to the G-protein coupled receptor 1 family. Opsin subfamily. In terms of processing, phosphorylated on some or all of the serine and threonine residues present in the C-terminal region.

The protein localises to the cell membrane. It localises to the photoreceptor inner segment. Its subcellular location is the cell projection. The protein resides in the cilium. It is found in the photoreceptor outer segment. The protein localises to the cytoplasm. It localises to the perinuclear region. Visual pigments are the light-absorbing molecules that mediate vision. They consist of an apoprotein, opsin, covalently linked to cis-retinal. Required for the maintenance of cone outer segment organization in the ventral retina, but not essential for the maintenance of functioning cone photoreceptors. Involved in ensuring correct abundance and localization of retinal membrane proteins. May increase spectral sensitivity in dim light. In Pan paniscus (Pygmy chimpanzee), this protein is Short-wave-sensitive opsin 1 (OPN1SW).